The chain runs to 631 residues: ATP-dependent RNA helicase mrh4, mitochondrial (631 aa).

The N-terminal 45 residues, 1–45 (MNRLGRLPLPLPPSVCLFCQSRATTPLPPSLQATRSMATARLRRR), are a transit peptide targeting the mitochondrion. The interval 68 to 111 (KERFGPFAGMNQTEARIRDKPRTRSRAAQKRSGEPEEDSQKESP) is disordered. A compositionally biased stretch (basic and acidic residues) spans 98 to 108 (RSGEPEEDSQK). Positions 141–174 (TSFDQFQLLPVVRNSISSQALPGLVDVTPTPIQR) match the Q motif motif. The span at 180 to 193 (LLEEPKTEKKPTKA) shows a compositional bias: basic and acidic residues. Residues 180 to 199 (LLEEPKTEKKPTKADDDEPQ) are disordered. The Helicase ATP-binding domain occupies 194–406 (DDDEPQYDQY…RKRYPDIKRL (213 aa)). 207–214 (AETGSGKT) provides a ligand contact to ATP. A disordered region spans residues 229 to 249 (EARDKELEKKEQEEKAREREE). The short motif at 353–356 (DEAD) is the DEAD box element. The Helicase C-terminal domain maps to 455–631 (GPYASYVAPK…EGMFRGQALI (177 aa)).

Belongs to the DEAD box helicase family. MRH4 subfamily.

It is found in the mitochondrion. It catalyses the reaction ATP + H2O = ADP + phosphate + H(+). In terms of biological role, ATP-binding RNA helicase involved in mitochondrial RNA metabolism. Required for maintenance of mitochondrial DNA. In Neosartorya fischeri (strain ATCC 1020 / DSM 3700 / CBS 544.65 / FGSC A1164 / JCM 1740 / NRRL 181 / WB 181) (Aspergillus fischerianus), this protein is ATP-dependent RNA helicase mrh4, mitochondrial (mrh4).